The following is a 154-amino-acid chain: Gene 35 protein (154 aa).

The interval L116–I137 is disordered.

The protein belongs to the herpesviridae UL96 family.

This chain is Gene 35 protein (35), found in Equus caballus (Horse).